Here is a 260-residue protein sequence, read N- to C-terminus: Acyl-coenzyme A diphosphatase FITM2 (260 aa).

Over 1–23 the chain is Cytoplasmic; it reads MERLENCAQMFQRRFLNESFRRH. Residues 24-44 form a helical membrane-spanning segment; the sequence is CPVLLACIVLGGSLLKELCPL. The Lumenal portion of the chain corresponds to 45 to 57; it reads PDSYWNNKRNVLN. Residues 58–78 form a helical membrane-spanning segment; sequence VYFVKFSWGWTLWLLLPFIAL. Over 79–93 the chain is Cytoplasmic; that stretch reads TNYKLTRSTTKVLRR. A helical membrane pass occupies residues 94 to 114; the sequence is LSSLLVSTLIWYLCTNLFLYI. At 115-145 the chain is on the lumenal side; sequence ENITGSCYESEAMSDPKEHQDRRECRLHSGY. A helical membrane pass occupies residues 146-166; that stretch reads WHGFDISGHCFLLSYCILLIL. His-154 is a catalytic residue. The Cytoplasmic segment spans residues 167 to 189; sequence EETSIISNIRFERHWHRMAINAQ. 2 helical membrane passes run 190 to 210 and 211 to 231; these read FAALSILVIIWVWMFLCTAVY and FHNIFQKVIGTAFGILAWYIT. The active site involves His-212. Residues 232-260 lie on the Cytoplasmic side of the membrane; sequence YRWWYLQPISPGLPPASASRSGKEPIYRN.

The protein belongs to the FIT family. FIT2 subfamily.

Its subcellular location is the endoplasmic reticulum membrane. It catalyses the reaction an acyl-CoA + H2O = an acyl-4'-phosphopantetheine + adenosine 3',5'-bisphosphate + 2 H(+). In terms of biological role, fatty acyl-coenzyme A (CoA) diphosphatase that hydrolyzes fatty acyl-CoA to yield acyl-4'-phosphopantetheine and adenosine 3',5'-bisphosphate. Preferentially hydrolyzes unsaturated long-chain acyl-CoA substrates in the endoplasmic reticulum (ER) lumen. This catalytic activity is required for maintaining ER structure and for lipid droplets (LDs) biogenesis, which are lipid storage organelles involved in maintaining lipid and energy homeostasis. May directly bind to diacylglycerol (DAGs) and triacylglycerol, which is also important for LD biogenesis. May support directional budding of nacent LDs from the ER into the cytosol by reducing DAG levels at sites of LD formation. May play a role in the regulation of cell morphology, ER morphology and cytoskeletal organization. The protein is Acyl-coenzyme A diphosphatase FITM2 of Xenopus tropicalis (Western clawed frog).